The following is a 415-amino-acid chain: L-cysteine:1D-myo-inositol 2-amino-2-deoxy-alpha-D-glucopyranoside ligase (415 aa).

Zn(2+) is bound at residue Cys-43. Residues 43–46 (CGIT), Thr-58, and 81–83 (NIT) each bind L-cysteinyl-5'-AMP. Residues 45 to 55 (ITPYDATHLGH) carry the 'HIGH' region motif. The 'ERGGDP' region signature appears at 187 to 192 (ERGGDP). Trp-227 is an L-cysteinyl-5'-AMP binding site. Cys-231 provides a ligand contact to Zn(2+). 249 to 251 (GSD) contacts L-cysteinyl-5'-AMP. A Zn(2+)-binding site is contributed by His-256. Ile-283 contacts L-cysteinyl-5'-AMP. The 'KMSKS' region motif lies at 289-293 (KMSKS).

This sequence belongs to the class-I aminoacyl-tRNA synthetase family. MshC subfamily. As to quaternary structure, monomer. The cofactor is Zn(2+).

The catalysed reaction is 1D-myo-inositol 2-amino-2-deoxy-alpha-D-glucopyranoside + L-cysteine + ATP = 1D-myo-inositol 2-(L-cysteinylamino)-2-deoxy-alpha-D-glucopyranoside + AMP + diphosphate + H(+). Catalyzes the ATP-dependent condensation of GlcN-Ins and L-cysteine to form L-Cys-GlcN-Ins. In Mycobacterium sp. (strain JLS), this protein is L-cysteine:1D-myo-inositol 2-amino-2-deoxy-alpha-D-glucopyranoside ligase.